Consider the following 333-residue polypeptide: Homeobox protein Nkx-3.2 (333 aa).

Disordered regions lie at residues 74–121 and 137–212; these read PART…RARV and DLEE…SRAA. A compositionally biased stretch (basic and acidic residues) spans 137 to 148; sequence DLEEEAPVRSDS. A compositionally biased stretch (gly residues) spans 179–191; it reads GAAGSGASGGQAG. The homeobox DNA-binding region spans 206–265; the sequence is KKRSRAAFSHAQVFELERRFNHQRYLSGPERADLAASLKLTETQVKIWFQNRRYKTKRRQ.

This sequence belongs to the NK-3 homeobox family. As to expression, expressed widely in mesoderm at the gastroduodenal junction (at protein level). Expressed in visceral mesoderm and embryonic skeleton. Expression is restricted to immature proliferative chondrocytes during endochondral ossification.

The protein localises to the nucleus. Functionally, transcriptional repressor that acts as a negative regulator of chondrocyte maturation. PLays a role in distal stomach development; required for proper antral-pyloric morphogenesis and development of antral-type epithelium. In concert with GSC, defines the structural components of the middle ear; required for tympanic ring and gonium development and in the regulation of the width of the malleus. The sequence is that of Homeobox protein Nkx-3.2 (Nkx3-2) from Mus musculus (Mouse).